The primary structure comprises 81 residues: ATP synthase subunit c, chloroplastic (81 aa).

2 helical membrane-spanning segments follow: residues 3–23 (AIVS…AAIG) and 57–77 (LAFM…LLFA).

The protein belongs to the ATPase C chain family. As to quaternary structure, F-type ATPases have 2 components, F(1) - the catalytic core - and F(0) - the membrane proton channel. F(1) has five subunits: alpha(3), beta(3), gamma(1), delta(1), epsilon(1). F(0) has four main subunits: a(1), b(1), b'(1) and c(10-14). The alpha and beta chains form an alternating ring which encloses part of the gamma chain. F(1) is attached to F(0) by a central stalk formed by the gamma and epsilon chains, while a peripheral stalk is formed by the delta, b and b' chains.

The protein localises to the plastid. It localises to the chloroplast thylakoid membrane. F(1)F(0) ATP synthase produces ATP from ADP in the presence of a proton or sodium gradient. F-type ATPases consist of two structural domains, F(1) containing the extramembraneous catalytic core and F(0) containing the membrane proton channel, linked together by a central stalk and a peripheral stalk. During catalysis, ATP synthesis in the catalytic domain of F(1) is coupled via a rotary mechanism of the central stalk subunits to proton translocation. Functionally, key component of the F(0) channel; it plays a direct role in translocation across the membrane. A homomeric c-ring of between 10-14 subunits forms the central stalk rotor element with the F(1) delta and epsilon subunits. This chain is ATP synthase subunit c, chloroplastic, found in Cyanidioschyzon merolae (strain NIES-3377 / 10D) (Unicellular red alga).